The primary structure comprises 186 residues: Ribosome rescue factor SmrB (186 aa).

In terms of domain architecture, Smr spans 99–174 (IDLHGLTQHQ…SDAAIIVIIE (76 aa)).

This sequence belongs to the SmrB family. Associates with collided ribosomes, but not with correctly translating polysomes.

In terms of biological role, acts as a ribosome collision sensor. Detects stalled/collided disomes (pairs of ribosomes where the leading ribosome is stalled and a second ribosome has collided with it) and endonucleolytically cleaves mRNA at the 5' boundary of the stalled ribosome. Stalled/collided disomes form a new interface (primarily via the 30S subunits) that binds SmrB. Cleaved mRNA becomes available for tmRNA ligation, leading to ribosomal subunit dissociation and rescue of stalled ribosomes. In Buchnera aphidicola subsp. Acyrthosiphon pisum (strain 5A), this protein is Ribosome rescue factor SmrB.